We begin with the raw amino-acid sequence, 224 residues long: Urease accessory protein UreG (224 aa).

Over residues 1–20 (MATHSHPHSHTVPARPRRVR) the composition is skewed to basic residues. A disordered region spans residues 1 to 25 (MATHSHPHSHTVPARPRRVRKPGEP). 32–39 (GPVGSGKT) lines the GTP pocket.

This sequence belongs to the SIMIBI class G3E GTPase family. UreG subfamily. Homodimer. UreD, UreF and UreG form a complex that acts as a GTP-hydrolysis-dependent molecular chaperone, activating the urease apoprotein by helping to assemble the nickel containing metallocenter of UreC. The UreE protein probably delivers the nickel.

Its subcellular location is the cytoplasm. Facilitates the functional incorporation of the urease nickel metallocenter. This process requires GTP hydrolysis, probably effectuated by UreG. In Mycobacterium bovis (strain ATCC BAA-935 / AF2122/97), this protein is Urease accessory protein UreG.